The following is a 425-amino-acid chain: Glutamate-1-semialdehyde 2,1-aminomutase (425 aa).

At Lys265 the chain carries N6-(pyridoxal phosphate)lysine.

Belongs to the class-III pyridoxal-phosphate-dependent aminotransferase family. HemL subfamily. In terms of assembly, homodimer. Pyridoxal 5'-phosphate serves as cofactor.

Its subcellular location is the cytoplasm. It catalyses the reaction (S)-4-amino-5-oxopentanoate = 5-aminolevulinate. It functions in the pathway porphyrin-containing compound metabolism; protoporphyrin-IX biosynthesis; 5-aminolevulinate from L-glutamyl-tRNA(Glu): step 2/2. In Chromobacterium violaceum (strain ATCC 12472 / DSM 30191 / JCM 1249 / CCUG 213 / NBRC 12614 / NCIMB 9131 / NCTC 9757 / MK), this protein is Glutamate-1-semialdehyde 2,1-aminomutase.